The sequence spans 77 residues: Tachyplesin-1 (77 aa).

A signal peptide spans 1–23; sequence MKKLVIALCLMMVLAVMVEEAEA. 2 cysteine pairs are disulfide-bonded: cysteine 26–cysteine 39 and cysteine 30–cysteine 35. Arginine 40 is modified (arginine amide). The propeptide occupies 41–77; sequence GKRNEVRQYRDRGYDVRAIPEETFFTRQDEDEDDDEE.

This sequence belongs to the tachyplesin/polyphemusin family. As to expression, hemocytes.

It is found in the secreted. Significantly inhibits the growth of Gram-negative and Gram-positive bacteria. This Tachypleus tridentatus (Japanese horseshoe crab) protein is Tachyplesin-1.